The sequence spans 709 residues: Fatty acid oxidation complex subunit alpha (709 aa).

The interval 1-188 (MEKTFNLTRR…KMGLVNDVVP (188 aa)) is enoyl-CoA hydratase. Residues 308 to 709 (RKVKKAVILG…AMAAEKARFF (402 aa)) are 3-hydroxyacyl-CoA dehydrogenase.

The protein in the N-terminal section; belongs to the enoyl-CoA hydratase/isomerase family. It in the central section; belongs to the 3-hydroxyacyl-CoA dehydrogenase family. Heterotetramer of two alpha chains (FadJ) and two beta chains (FadI).

Its subcellular location is the cytoplasm. It carries out the reaction a (3S)-3-hydroxyacyl-CoA = a (2E)-enoyl-CoA + H2O. The enzyme catalyses a 4-saturated-(3S)-3-hydroxyacyl-CoA = a (3E)-enoyl-CoA + H2O. The catalysed reaction is a (3S)-3-hydroxyacyl-CoA + NAD(+) = a 3-oxoacyl-CoA + NADH + H(+). It catalyses the reaction (3S)-3-hydroxybutanoyl-CoA = (3R)-3-hydroxybutanoyl-CoA. The protein operates within lipid metabolism; fatty acid beta-oxidation. Its function is as follows. Catalyzes the formation of a hydroxyacyl-CoA by addition of water on enoyl-CoA. Also exhibits 3-hydroxyacyl-CoA epimerase and 3-hydroxyacyl-CoA dehydrogenase activities. The polypeptide is Fatty acid oxidation complex subunit alpha (Shewanella sp. (strain ANA-3)).